The following is a 319-amino-acid chain: ATP-dependent 6-phosphofructokinase (319 aa).

Residue glycine 11 coordinates ATP. 21 to 25 (RAVVR) contributes to the ADP binding site. Residues 72–73 (RY) and 102–105 (GDGS) contribute to the ATP site. A Mg(2+)-binding site is contributed by aspartate 103. 125–127 (TID) contributes to the substrate binding site. Catalysis depends on aspartate 127, which acts as the Proton acceptor. Residue arginine 154 participates in ADP binding. Substrate contacts are provided by residues arginine 162 and 169–171 (MGR). ADP is bound by residues 185–187 (GAE), arginine 211, and 213–215 (KKH). Substrate is bound by residues glutamate 222, arginine 243, and 249 to 252 (HVQR).

Belongs to the phosphofructokinase type A (PFKA) family. ATP-dependent PFK group I subfamily. Prokaryotic clade 'B1' sub-subfamily. As to quaternary structure, homotetramer. It depends on Mg(2+) as a cofactor.

It localises to the cytoplasm. The enzyme catalyses beta-D-fructose 6-phosphate + ATP = beta-D-fructose 1,6-bisphosphate + ADP + H(+). Its pathway is carbohydrate degradation; glycolysis; D-glyceraldehyde 3-phosphate and glycerone phosphate from D-glucose: step 3/4. With respect to regulation, allosterically activated by ADP and other diphosphonucleosides, and allosterically inhibited by phosphoenolpyruvate. Its function is as follows. Catalyzes the phosphorylation of D-fructose 6-phosphate to fructose 1,6-bisphosphate by ATP, the first committing step of glycolysis. The polypeptide is ATP-dependent 6-phosphofructokinase (Listeria monocytogenes serotype 4b (strain CLIP80459)).